A 380-amino-acid chain; its full sequence is MRIVADENIPLLDAFFAGFGEIRRLPGRSIDRAAVADADVLLVRSVTPVTREMLEGSPVRFVGTCTIGTDHLDLAYFQDAAIQWSSAPGCNARGVVDYVLGSLLTLAEIEGVDLRQRTYGVVGAGQVGGRLIAVLKALGWKVLVCDPPRQSAEGGDFVSLDEILQRCDVISLHTPLDKSGQSPTWHLLDEARLRQLRQGAWLINASRGAVVDNRALHDVMLEREDLQAVLDVWEGEPQVNVALADLCVIGTPHIAGYSLDGRQRGTAQIYQALCTFLDQPAAISLADLLPTPWLAQVSLDAATDPQWALNMLCRGVYDPRRDDADFRRSLTGDTASQRLAFDALRKHYPPRREIEGLKVHLEGESDTLTQLIRALGAVRV.

Ser45 and Thr66 together coordinate substrate. NAD(+) contacts are provided by residues 126–127, Asp146, Thr174, 205–207, and Asp231; these read QV and ASR. Residue Arg207 is part of the active site. Residue Glu236 is part of the active site. The Proton donor role is filled by His253. Residue Gly256 coordinates NAD(+). Substrate is bound at residue Tyr257.

This sequence belongs to the D-isomer specific 2-hydroxyacid dehydrogenase family. PdxB subfamily. Homodimer.

It is found in the cytoplasm. The catalysed reaction is 4-phospho-D-erythronate + NAD(+) = (R)-3-hydroxy-2-oxo-4-phosphooxybutanoate + NADH + H(+). Its pathway is cofactor biosynthesis; pyridoxine 5'-phosphate biosynthesis; pyridoxine 5'-phosphate from D-erythrose 4-phosphate: step 2/5. Its function is as follows. Catalyzes the oxidation of erythronate-4-phosphate to 3-hydroxy-2-oxo-4-phosphonooxybutanoate. This is Erythronate-4-phosphate dehydrogenase from Pseudomonas syringae pv. tomato (strain ATCC BAA-871 / DC3000).